A 337-amino-acid polypeptide reads, in one-letter code: Biotin synthase (337 aa).

The region spanning 58 to 283 is the Radical SAM core domain; the sequence is EDVEVEGIVS…RTVLRYAGGR (226 aa). Cys73, Cys77, and Cys80 together coordinate [4Fe-4S] cluster. Residues Cys116, Cys149, Cys208, and Arg278 each coordinate [2Fe-2S] cluster.

Belongs to the radical SAM superfamily. Biotin synthase family. In terms of assembly, homodimer. The cofactor is [4Fe-4S] cluster. [2Fe-2S] cluster serves as cofactor.

The catalysed reaction is (4R,5S)-dethiobiotin + (sulfur carrier)-SH + 2 reduced [2Fe-2S]-[ferredoxin] + 2 S-adenosyl-L-methionine = (sulfur carrier)-H + biotin + 2 5'-deoxyadenosine + 2 L-methionine + 2 oxidized [2Fe-2S]-[ferredoxin]. Its pathway is cofactor biosynthesis; biotin biosynthesis; biotin from 7,8-diaminononanoate: step 2/2. In terms of biological role, catalyzes the conversion of dethiobiotin (DTB) to biotin by the insertion of a sulfur atom into dethiobiotin via a radical-based mechanism. The chain is Biotin synthase from Pseudarthrobacter chlorophenolicus (strain ATCC 700700 / DSM 12829 / CIP 107037 / JCM 12360 / KCTC 9906 / NCIMB 13794 / A6) (Arthrobacter chlorophenolicus).